The sequence spans 156 residues: 16 kDa phloem protein 1 (156 aa).

In terms of domain architecture, C2 spans 1 to 108; the sequence is MAVGILEVSL…LEMGVEKGTA (108 aa). Ca(2+) is bound by residues Asp-20, Asp-26, Asp-78, Asp-80, Ser-83, and Asp-86.

The cofactor is Ca(2+).

In terms of biological role, binds to both sense and antisense RNA. Can also bind sheared DNA and dodecamer DNA with a low affinity. Interacts with mesophyll plasmodesmata to mediate its own cell-to-cell transport and potentiate RNA trafficking. May play a role in plant defense signaling. The chain is 16 kDa phloem protein 1 from Arabidopsis thaliana (Mouse-ear cress).